The primary structure comprises 354 residues: MNGTEGPYFYVPMVNTTGIVRSPYEYPQYYLVSPAAYACLGAYMFFLILVGFPVNFLTLYVTIEHKKLRTPLNYILLNLAVADLFMVFGGFTTTIYTSMHGYFVLGRLGCNLEGYFATLGGEIGLWSLVVLAVERWLVVCKPISNFRFTENHAIMGLVFTWIMANACAAPPLLGWSRYIPEGMQCSCGVDYYTRAEGFNNESFVIYMFICHFCIPLVVVFFCYGRLLCAVKEAAAAQQESETTQRAEREVTRMVVILVIGFLVCWTPYASVAWYIFSNQGSEFGPLFMTIPAFFAKSSSIYNPMIYICMNKQFRHCMITTLCCGKNPFEEEEGASTTASKTEASSVSSSSVSPA.

The Extracellular portion of the chain corresponds to 1 to 36; the sequence is MNGTEGPYFYVPMVNTTGIVRSPYEYPQYYLVSPAA. 2 N-linked (GlcNAc...) asparagine glycosylation sites follow: Asn2 and Asn15. The helical transmembrane segment at 37-61 threads the bilayer; it reads YACLGAYMFFLILVGFPVNFLTLYV. The Cytoplasmic segment spans residues 62 to 73; the sequence is TIEHKKLRTPLN. A helical membrane pass occupies residues 74-96; the sequence is YILLNLAVADLFMVFGGFTTTIY. The Extracellular portion of the chain corresponds to 97–110; it reads TSMHGYFVLGRLGC. A disulfide bridge connects residues Cys110 and Cys187. Residues 111–133 traverse the membrane as a helical segment; it reads NLEGYFATLGGEIGLWSLVVLAV. A 'Ionic lock' involved in activated form stabilization motif is present at residues 134-136; sequence ERW. Topologically, residues 134 to 152 are cytoplasmic; it reads ERWLVVCKPISNFRFTENH. The chain crosses the membrane as a helical span at residues 153–173; sequence AIMGLVFTWIMANACAAPPLL. Over 174 to 202 the chain is Extracellular; that stretch reads GWSRYIPEGMQCSCGVDYYTRAEGFNNES. Residues 203–224 traverse the membrane as a helical segment; that stretch reads FVIYMFICHFCIPLVVVFFCYG. Topologically, residues 225 to 252 are cytoplasmic; sequence RLLCAVKEAAAAQQESETTQRAEREVTR. A helical membrane pass occupies residues 253 to 274; the sequence is MVVILVIGFLVCWTPYASVAWY. Over 275–286 the chain is Extracellular; the sequence is IFSNQGSEFGPL. Residues 287-308 form a helical membrane-spanning segment; sequence FMTIPAFFAKSSSIYNPMIYIC. An N6-(retinylidene)lysine modification is found at Lys296. Residues 309 to 354 are Cytoplasmic-facing; sequence MNKQFRHCMITTLCCGKNPFEEEEGASTTASKTEASSVSSSSVSPA. 2 S-palmitoyl cysteine lipidation sites follow: Cys322 and Cys323. The tract at residues 333-354 is disordered; it reads GASTTASKTEASSVSSSSVSPA. Positions 334–354 are enriched in low complexity; sequence ASTTASKTEASSVSSSSVSPA.

It belongs to the G-protein coupled receptor 1 family. Opsin subfamily. In terms of processing, phosphorylated on some or all of the serine and threonine residues present in the C-terminal region. Contains one covalently linked retinal chromophore.

It is found in the membrane. Its subcellular location is the cell projection. The protein localises to the cilium. It localises to the photoreceptor outer segment. In terms of biological role, photoreceptor required for image-forming vision at low light intensity. While most salt water fish species use retinal as chromophore, most freshwater fish use 3-dehydroretinal, or a mixture of retinal and 3-dehydroretinal. Light-induced isomerization of 11-cis to all-trans retinal triggers a conformational change that activates signaling via G-proteins. Subsequent receptor phosphorylation mediates displacement of the bound G-protein alpha subunit by arrestin and terminates signaling. This Gambusia affinis (Western mosquitofish) protein is Rhodopsin (rho).